Consider the following 178-residue polypeptide: Protein SPEAR1 (178 aa).

Disordered stretches follow at residues 1 to 48 (MGST…QRGL) and 139 to 178 (HFLN…RLSL). Residues 14 to 28 (SSPPSSSPTSSSSSP) are compositionally biased toward low complexity. Positions 46–54 (RGLGVAQLE) match the SPL motif. Polar residues predominate over residues 144–167 (DPSSTTRRSKSLGSGIQHSGSSEN). Positions 170–176 (VDLELRL) match the EAR motif.

Interacts with SPL and SPEAR2. As to expression, not detected in leaves.

Functionally, adapter-like transcriptional repressor recruiting TPL/TPR corepressors to inhibit TCP transcription factors. The chain is Protein SPEAR1 from Arabidopsis thaliana (Mouse-ear cress).